Here is a 178-residue protein sequence, read N- to C-terminus: Large ribosomal subunit protein uL6 (178 aa).

This sequence belongs to the universal ribosomal protein uL6 family. In terms of assembly, part of the 50S ribosomal subunit.

Its function is as follows. This protein binds to the 23S rRNA, and is important in its secondary structure. It is located near the subunit interface in the base of the L7/L12 stalk, and near the tRNA binding site of the peptidyltransferase center. This Gluconobacter oxydans (strain 621H) (Gluconobacter suboxydans) protein is Large ribosomal subunit protein uL6.